Here is a 247-residue protein sequence, read N- to C-terminus: UPF0309 protein lin2794 (247 aa).

The region spanning 31–214 is the SIS domain; sequence VAESIENDGV…EKMVNDNFTP (184 aa).

It belongs to the UPF0309 family.

In Listeria innocua serovar 6a (strain ATCC BAA-680 / CLIP 11262), this protein is UPF0309 protein lin2794.